Here is a 272-residue protein sequence, read N- to C-terminus: Acidic leucine-rich nuclear phosphoprotein 32 family member B (272 aa).

4 LRR repeats span residues 18–38 (AVRE…EGLT), 43–64 (NLEF…PKLP), 65–87 (KLKK…AEEL), and 89–110 (SLTH…EPLK). One can recognise an LRRCT domain in the interval 123–161 (CEVTNRSDYRETVFRLLPQLSYLDGYDREDQEAPDSDVE). Residues 149–254 (DREDQEAPDS…DEDEDEEEEE (106 aa)) are compositionally biased toward acidic residues. The segment at 149–272 (DREDQEAPDS…RETDDEGEDD (124 aa)) is disordered. Serine 164 and serine 171 each carry phosphoserine. A compositionally biased stretch (basic and acidic residues) spans 255 to 265 (SGKGEKRKRET). The Nuclear localization signal motif lies at 260–263 (KRKR). Threonine 265 is modified (phosphothreonine).

Belongs to the ANP32 family. Interacts with histones H3 and H4. Interacts with KLF5; this interaction induces promoter region-specific histone incorporation and inhibition of histone acetylation by ANP32B. Some glutamate residues are glycylated by TTLL8. This modification occurs exclusively on glutamate residues and results in a glycine chain on the gamma-carboxyl group. In terms of processing, directly cleaved by caspase-3/CASP3.

The protein resides in the nucleus. In terms of biological role, multifunctional protein that is involved in the regulation of many processes including cell proliferation, apoptosis, cell cycle progression or transcription. Regulates the proliferation of neuronal stem cells, differentiation of leukemic cells and progression from G1 to S phase of the cell cycle. As negative regulator of caspase-3-dependent apoptosis, may act as an antagonist of ANP32A in regulating tissue homeostasis. Exhibits histone chaperone properties, able to recruit histones to certain promoters, thus regulating the transcription of specific genes. Also plays an essential role in the nucleocytoplasmic transport of specific mRNAs via the uncommon nuclear mRNA export receptor XPO1/CRM1. Participates in the regulation of adequate adaptive immune responses by acting on mRNA expression and cell proliferation. The protein is Acidic leucine-rich nuclear phosphoprotein 32 family member B (Anp32b) of Mus musculus (Mouse).